The primary structure comprises 448 residues: Putative flavin-containing monooxygenase FMO GS-OX-like 10 (448 aa).

Residue 18-23 (GAGAAG) coordinates FAD. An NADP(+)-binding site is contributed by 212–217 (GSSVSG).

The protein belongs to the FMO family. Requires FAD as cofactor.

Its function is as follows. Catalyzes the conversion of methylthioalkyl glucosinolates of any chain length into methylsulfinylalkyl glucosinolates. The sequence is that of Putative flavin-containing monooxygenase FMO GS-OX-like 10 from Arabidopsis thaliana (Mouse-ear cress).